The following is a 41-amino-acid chain: Large ribosomal subunit protein bL36 (41 aa).

It belongs to the bacterial ribosomal protein bL36 family.

The polypeptide is Large ribosomal subunit protein bL36 (Novosphingobium aromaticivorans (strain ATCC 700278 / DSM 12444 / CCUG 56034 / CIP 105152 / NBRC 16084 / F199)).